The primary structure comprises 239 residues: Uridylate kinase (239 aa).

13-16 (KLSG) serves as a coordination point for ATP. Gly55 is a binding site for UMP. Residues Gly56 and Arg60 each contribute to the ATP site. UMP is bound by residues Asp75 and 136 to 143 (TGNPFFTT). 4 residues coordinate ATP: Thr163, Asn164, Tyr169, and Asp172.

The protein belongs to the UMP kinase family. Homohexamer.

It localises to the cytoplasm. It carries out the reaction UMP + ATP = UDP + ADP. It functions in the pathway pyrimidine metabolism; CTP biosynthesis via de novo pathway; UDP from UMP (UMPK route): step 1/1. Its activity is regulated as follows. Inhibited by UTP. In terms of biological role, catalyzes the reversible phosphorylation of UMP to UDP. This is Uridylate kinase from Neisseria meningitidis serogroup C / serotype 2a (strain ATCC 700532 / DSM 15464 / FAM18).